The primary structure comprises 466 residues: MAIKTPKEIVKILNEYIIGQDEAKKSVAIALYNRYRRMQLPKQMQREITPKNLLMAGPTGVGKTEIARRLATIVEAPFVKVEATKFTEVGYVGRDVESMVRDLVGEAVRMEEKDQFARVKPQATKEANKELVRLLAPGEKREKRENQVQQMQDMMSMLMGGMNNQTNNNQEEISEEVRNQRMDVAEKLNKDLLEDREVTIEVEQAPKANPMSDMMGQMGMDMGSMLNDIMPKKKVKRTLPVREAREVLIQEESRKLVDYDTIYQRAIERSQNNGIIFIDEIDKIIAGNKRNSGEVSREGVQRDILPIVEGSTVNTKYGPVSTDHILFIAAGAFAESKPSDLIPELQGRFPIRVELNALTKDDFVKILKDPQNSLLKQYIALLKADGIKLIFTQEAVDKIAEIAFDVNQGTDNIGARRLSTILEKLLEDVLYEGPDMEMGEITITEAYVEEKLGDIIMNKDLTKFIL.

ATP contacts are provided by residues isoleucine 18, 60 to 65 (GVGKTE), aspartate 279, glutamate 344, and arginine 416.

It belongs to the ClpX chaperone family. HslU subfamily. As to quaternary structure, a double ring-shaped homohexamer of HslV is capped on each side by a ring-shaped HslU homohexamer. The assembly of the HslU/HslV complex is dependent on binding of ATP.

The protein resides in the cytoplasm. In terms of biological role, ATPase subunit of a proteasome-like degradation complex; this subunit has chaperone activity. The binding of ATP and its subsequent hydrolysis by HslU are essential for unfolding of protein substrates subsequently hydrolyzed by HslV. HslU recognizes the N-terminal part of its protein substrates and unfolds these before they are guided to HslV for hydrolysis. In Lactobacillus acidophilus (strain ATCC 700396 / NCK56 / N2 / NCFM), this protein is ATP-dependent protease ATPase subunit HslU.